A 66-amino-acid chain; its full sequence is MQKEIQPKYNPVEVRCACGNTFVAGSTKDEIKVEICSECHPFYTGKQKNIEKGGRIDKFKKRFKMD.

Zn(2+) is bound by residues cysteine 16, cysteine 18, cysteine 36, and cysteine 39.

This sequence belongs to the bacterial ribosomal protein bL31 family. Type A subfamily. As to quaternary structure, part of the 50S ribosomal subunit. Requires Zn(2+) as cofactor.

Functionally, binds the 23S rRNA. The polypeptide is Large ribosomal subunit protein bL31 (Clostridioides difficile (strain 630) (Peptoclostridium difficile)).